Here is a 92-residue protein sequence, read N- to C-terminus: Small ribosomal subunit protein bS18A (92 aa).

This sequence belongs to the bacterial ribosomal protein bS18 family. Part of the 30S ribosomal subunit. Forms a tight heterodimer with protein bS6.

Functionally, binds as a heterodimer with protein bS6 to the central domain of the 16S rRNA, where it helps stabilize the platform of the 30S subunit. The polypeptide is Small ribosomal subunit protein bS18A (Cupriavidus pinatubonensis (strain JMP 134 / LMG 1197) (Cupriavidus necator (strain JMP 134))).